The chain runs to 169 residues: Large ribosomal subunit protein uL10 (169 aa).

This sequence belongs to the universal ribosomal protein uL10 family. Part of the 50S ribosomal subunit.

The sequence is that of Large ribosomal subunit protein uL10 (rplJ) from Deinococcus radiodurans (strain ATCC 13939 / DSM 20539 / JCM 16871 / CCUG 27074 / LMG 4051 / NBRC 15346 / NCIMB 9279 / VKM B-1422 / R1).